The chain runs to 224 residues: Thymidylate kinase (224 aa).

13–20 is an ATP binding site; sequence GGEGAGKS.

It belongs to the thymidylate kinase family.

The enzyme catalyses dTMP + ATP = dTDP + ADP. Phosphorylation of dTMP to form dTDP in both de novo and salvage pathways of dTTP synthesis. The protein is Thymidylate kinase of Agrobacterium fabrum (strain C58 / ATCC 33970) (Agrobacterium tumefaciens (strain C58)).